Reading from the N-terminus, the 258-residue chain is Thiazole synthase (258 aa).

Lys100 serves as the catalytic Schiff-base intermediate with DXP. 1-deoxy-D-xylulose 5-phosphate-binding positions include Gly161, 187–188 (AG), and 209–210 (NT).

It belongs to the ThiG family. Homotetramer. Forms heterodimers with either ThiH or ThiS.

It is found in the cytoplasm. The enzyme catalyses [ThiS sulfur-carrier protein]-C-terminal-Gly-aminoethanethioate + 2-iminoacetate + 1-deoxy-D-xylulose 5-phosphate = [ThiS sulfur-carrier protein]-C-terminal Gly-Gly + 2-[(2R,5Z)-2-carboxy-4-methylthiazol-5(2H)-ylidene]ethyl phosphate + 2 H2O + H(+). The protein operates within cofactor biosynthesis; thiamine diphosphate biosynthesis. Its function is as follows. Catalyzes the rearrangement of 1-deoxy-D-xylulose 5-phosphate (DXP) to produce the thiazole phosphate moiety of thiamine. Sulfur is provided by the thiocarboxylate moiety of the carrier protein ThiS. In vitro, sulfur can be provided by H(2)S. This Campylobacter jejuni subsp. jejuni serotype O:23/36 (strain 81-176) protein is Thiazole synthase.